We begin with the raw amino-acid sequence, 445 residues long: Ribosomal protein uS12 methylthiotransferase RimO (445 aa).

The region spanning 6-121 is the MTTase N-terminal domain; sequence KKVAVVTLGC…ILETLEEAEK (116 aa). C15, C50, C84, C159, C163, and C166 together coordinate [4Fe-4S] cluster. Residues 145 to 375 form the Radical SAM core domain; it reads LSPKQYAYVK…MELQHDIAYE (231 aa). Residues 378–445 enclose the TRAM domain; that stretch reads QRWVGQTLKV…SYDLMGEVVQ (68 aa).

Belongs to the methylthiotransferase family. RimO subfamily. [4Fe-4S] cluster is required as a cofactor.

It localises to the cytoplasm. The enzyme catalyses L-aspartate(89)-[ribosomal protein uS12]-hydrogen + (sulfur carrier)-SH + AH2 + 2 S-adenosyl-L-methionine = 3-methylsulfanyl-L-aspartate(89)-[ribosomal protein uS12]-hydrogen + (sulfur carrier)-H + 5'-deoxyadenosine + L-methionine + A + S-adenosyl-L-homocysteine + 2 H(+). Functionally, catalyzes the methylthiolation of an aspartic acid residue of ribosomal protein uS12. This chain is Ribosomal protein uS12 methylthiotransferase RimO, found in Desulfitobacterium hafniense (strain Y51).